The primary structure comprises 112 residues: T cell receptor alpha variable 21 (112 aa).

The N-terminal stretch at Met1–Ser19 is a signal peptide. One can recognise an Ig-like domain in the interval Gln21–Arg112. N-linked (GlcNAc...) asparagine glycans are attached at residues Asn41 and Asn82. Cys42 and Cys109 are joined by a disulfide.

As to quaternary structure, alpha-beta TR is a heterodimer composed of an alpha and beta chain; disulfide-linked. The alpha-beta TR is associated with the transmembrane signaling CD3 coreceptor proteins to form the TR-CD3 (TcR or TCR). The assembly of alpha-beta TR heterodimers with CD3 occurs in the endoplasmic reticulum where a single alpha-beta TR heterodimer associates with one CD3D-CD3E heterodimer, one CD3G-CD3E heterodimer and one CD247 homodimer forming a stable octameric structure. CD3D-CD3E and CD3G-CD3E heterodimers preferentially associate with TR alpha and TR beta chains, respectively. The association of the CD247 homodimer is the last step of TcR assembly in the endoplasmic reticulum and is required for transport to the cell surface.

It is found in the cell membrane. V region of the variable domain of T cell receptor (TR) alpha chain that participates in the antigen recognition. Alpha-beta T cell receptors are antigen specific receptors which are essential to the immune response and are present on the cell surface of T lymphocytes. Recognize peptide-major histocompatibility (MH) (pMH) complexes that are displayed by antigen presenting cells (APC), a prerequisite for efficient T cell adaptive immunity against pathogens. Binding of alpha-beta TR to pMH complex initiates TR-CD3 clustering on the cell surface and intracellular activation of LCK that phosphorylates the ITAM motifs of CD3G, CD3D, CD3E and CD247 enabling the recruitment of ZAP70. In turn ZAP70 phosphorylates LAT, which recruits numerous signaling molecules to form the LAT signalosome. The LAT signalosome propagates signal branching to three major signaling pathways, the calcium, the mitogen-activated protein kinase (MAPK) kinase and the nuclear factor NF-kappa-B (NF-kB) pathways, leading to the mobilization of transcription factors that are critical for gene expression and essential for T cell growth and differentiation. The T cell repertoire is generated in the thymus, by V-(D)-J rearrangement. This repertoire is then shaped by intrathymic selection events to generate a peripheral T cell pool of self-MH restricted, non-autoaggressive T cells. Post-thymic interaction of alpha-beta TR with the pMH complexes shapes TR structural and functional avidity. The polypeptide is T cell receptor alpha variable 21 (Homo sapiens (Human)).